The following is a 264-amino-acid chain: 3-methyl-2-oxobutanoate hydroxymethyltransferase (264 aa).

2 residues coordinate Mg(2+): D45 and D84. 3-methyl-2-oxobutanoate is bound by residues 45–46, D84, and K112; that span reads DS. E114 provides a ligand contact to Mg(2+). E181 (proton acceptor) is an active-site residue.

This sequence belongs to the PanB family. As to quaternary structure, homodecamer; pentamer of dimers. The cofactor is Mg(2+).

The protein localises to the cytoplasm. The catalysed reaction is 3-methyl-2-oxobutanoate + (6R)-5,10-methylene-5,6,7,8-tetrahydrofolate + H2O = 2-dehydropantoate + (6S)-5,6,7,8-tetrahydrofolate. It functions in the pathway cofactor biosynthesis; (R)-pantothenate biosynthesis; (R)-pantoate from 3-methyl-2-oxobutanoate: step 1/2. Functionally, catalyzes the reversible reaction in which hydroxymethyl group from 5,10-methylenetetrahydrofolate is transferred onto alpha-ketoisovalerate to form ketopantoate. The sequence is that of 3-methyl-2-oxobutanoate hydroxymethyltransferase from Escherichia coli O1:K1 / APEC.